The primary structure comprises 303 residues: Beta-lactamase L2 (303 aa).

Positions 1-35 (MLARRRFLQFSGAAVASSLALPLLARAAGKTAASA) form a signal peptide, tat-type signal. Ser83 (acyl-ester intermediate) is an active-site residue. Position 247–249 (247–249 (KTG)) interacts with substrate.

It belongs to the class-A beta-lactamase family. Post-translationally, predicted to be exported by the Tat system. The position of the signal peptide cleavage has not been experimentally proven.

It carries out the reaction a beta-lactam + H2O = a substituted beta-amino acid. The polypeptide is Beta-lactamase L2 (Stenotrophomonas maltophilia (Pseudomonas maltophilia)).